The sequence spans 182 residues: Aralkylamine dehydrogenase light chain (182 aa).

A signal peptide (tat-type signal) is located at residues 1–47 (MRWLDKFGESLSRSVAHKTSRRSVLRSVGKLMVGSAFVLPVLPVARA). Disulfide bonds link cysteine 75–cysteine 140, cysteine 81–cysteine 113, cysteine 88–cysteine 171, cysteine 90–cysteine 138, cysteine 91–cysteine 135, cysteine 98–cysteine 129, and cysteine 130–cysteine 161. Aspartate 84 is a binding site for substrate. The active-site Tryptophylquinone 6'-substrate hemiaminal intermediate is tryptophan 109. Tryptophan 109 is subject to Tryptophylquinone. A cross-link (tryptophan tryptophylquinone (Trp-Trp)) is located at residues 109–160 (WIGTCHNPHDGKDYLISYHDCCGKTACGRCQCNTQTRERPGYEFFLHNDVNW). Aspartate 128 functions as the Proton acceptor in the catalytic mechanism. 156 to 158 (NDV) lines the substrate pocket.

The protein belongs to the aromatic amine dehydrogenase light chain family. Heterotetramer of two light and two heavy chains. Binds two azurin molecules per heterotetramer. The cofactor is tryptophan tryptophylquinone residue. In terms of processing, tryptophan tryptophylquinone (TTQ) is formed by oxidation of the indole ring of a tryptophan to form tryptophylquinone followed by covalent cross-linking with another tryptophan residue. Post-translationally, predicted to be exported by the Tat system. The position of the signal peptide cleavage has been experimentally proven.

The protein localises to the periplasm. The catalysed reaction is an aralkylamine + 2 oxidized [azurin] + H2O = an aromatic aldehyde + 2 reduced [azurin] + NH4(+) + 2 H(+). Irreversibly inhibited by phenylhydrazine, hydroxylamine, semicarbazide, hydrazine and aminoguanidine. Reversibly inhibited by isonicotinic acid hydrazide (isoniazid) and isonicotinic acid 2-isopropyl hydrazide (iproniazid). In terms of biological role, oxidizes primary aromatic amines and, more slowly, some long-chain aliphatic amines, but not methylamine or ethylamine. Uses azurin as an electron acceptor to transfer electrons from the reduced tryptophylquinone cofactor. This is Aralkylamine dehydrogenase light chain from Alcaligenes faecalis.